The sequence spans 288 residues: UPF0761 membrane protein HS_0693 (288 aa).

The next 6 helical transmembrane spans lie at 36 to 56 (TLALVPLIMVFFSVFAAFPVF), 92 to 112 (QMSAVGIISLIVVALMLIHSI), 127 to 147 (PAIFSFAIYWLILTLGPIVIA), 176 to 196 (LLSLMPFFLTWFIFTVLYMVV), 200 to 220 (KVSIIHSAAGALIAAVFFTLG), and 240 to 260 (AMATLPIMLLWIQLSWTAVLL).

The protein belongs to the UPF0761 family.

The protein localises to the cell inner membrane. The chain is UPF0761 membrane protein HS_0693 from Histophilus somni (strain 129Pt) (Haemophilus somnus).